The primary structure comprises 248 residues: Probable transcriptional regulatory protein Mrad2831_3553 (248 aa).

The protein belongs to the TACO1 family.

The protein resides in the cytoplasm. This chain is Probable transcriptional regulatory protein Mrad2831_3553, found in Methylobacterium radiotolerans (strain ATCC 27329 / DSM 1819 / JCM 2831 / NBRC 15690 / NCIMB 10815 / 0-1).